Consider the following 1002-residue polypeptide: DNA-directed RNA polymerase 1B, mitochondrial (1002 aa).

A mitochondrion-targeting transit peptide spans Met1 to Ala21. Active-site residues include Asp703, Lys778, and Asp935.

Belongs to the phage and mitochondrial RNA polymerase family.

The protein localises to the mitochondrion. The catalysed reaction is RNA(n) + a ribonucleoside 5'-triphosphate = RNA(n+1) + diphosphate. DNA-dependent RNA polymerase catalyzes the transcription of DNA into RNA using the four ribonucleoside triphosphates as substrates. This is DNA-directed RNA polymerase 1B, mitochondrial (RPOT1-TOM) from Nicotiana tabacum (Common tobacco).